We begin with the raw amino-acid sequence, 269 residues long: Cleavage and polyadenylation specificity factor subunit 4 (269 aa).

5 consecutive C3H1-type zinc fingers follow at residues 35–61 (KSGA…RHIS), 62–89 (GEKT…HEYD), 90–117 (MTKM…HIDP), 118–142 (ESKI…RHRH), and 143–169 (TRRV…HPRF). Residues 173 to 199 (MGTTEQPPLPQQTQPPAKQSNNPPLQR) are disordered. Phosphoserine occurs at positions 200, 202, and 212. Residues 243–260 (VTCYKCGEKGHYANRCTK) form a CCHC-type zinc finger. Serine 267 is modified (phosphoserine).

This sequence belongs to the CPSF4/YTH1 family. Component of the cleavage and polyadenylation specificity factor (CPSF) complex, composed of CPSF1, CPSF2, CPSF3, CPSF4 and FIP1L1. Interacts with FIP1L1. In terms of assembly, (Microbial infection) Interacts with influenza A virus NS1 blocks processing of pre-mRNAs, thereby preventing nuclear export of host cell mRNAs.

The protein resides in the nucleus. Functionally, component of the cleavage and polyadenylation specificity factor (CPSF) complex that play a key role in pre-mRNA 3'-end formation, recognizing the AAUAAA signal sequence and interacting with poly(A) polymerase and other factors to bring about cleavage and poly(A) addition. CPSF4 binds RNA polymers with a preference for poly(U). This chain is Cleavage and polyadenylation specificity factor subunit 4 (CPSF4), found in Homo sapiens (Human).